We begin with the raw amino-acid sequence, 509 residues long: Bifunctional purine biosynthesis protein PurH (509 aa).

Residues 1-144 (MKRALISVSD…KNYAAVTVVV (144 aa)) enclose the MGS-like domain.

It belongs to the PurH family.

The enzyme catalyses (6R)-10-formyltetrahydrofolate + 5-amino-1-(5-phospho-beta-D-ribosyl)imidazole-4-carboxamide = 5-formamido-1-(5-phospho-D-ribosyl)imidazole-4-carboxamide + (6S)-5,6,7,8-tetrahydrofolate. It catalyses the reaction IMP + H2O = 5-formamido-1-(5-phospho-D-ribosyl)imidazole-4-carboxamide. Its pathway is purine metabolism; IMP biosynthesis via de novo pathway; 5-formamido-1-(5-phospho-D-ribosyl)imidazole-4-carboxamide from 5-amino-1-(5-phospho-D-ribosyl)imidazole-4-carboxamide (10-formyl THF route): step 1/1. It functions in the pathway purine metabolism; IMP biosynthesis via de novo pathway; IMP from 5-formamido-1-(5-phospho-D-ribosyl)imidazole-4-carboxamide: step 1/1. This chain is Bifunctional purine biosynthesis protein PurH, found in Listeria innocua serovar 6a (strain ATCC BAA-680 / CLIP 11262).